Here is a 101-residue protein sequence, read N- to C-terminus: Thylakoid-associated protein slr0729 (101 aa).

The protein resides in the cellular thylakoid membrane. The chain is Thylakoid-associated protein slr0729 from Synechocystis sp. (strain ATCC 27184 / PCC 6803 / Kazusa).